Reading from the N-terminus, the 275-residue chain is Probable aquaporin NIP7-1 (275 aa).

Over residues 1 to 11 (MNGEARSRVVD) the composition is skewed to basic and acidic residues. The tract at residues 1–26 (MNGEARSRVVDQEAGSTPSTLRDEDH) is disordered. 2 consecutive transmembrane segments (helical) span residues 47-67 (IVMAELVGTFILMFSVCGVIS) and 76-96 (VGLLEYAVTAGLSVVVVVYSI). Residues 105–107 (NPS) carry the NPA 1 motif. Transmembrane regions (helical) follow at residues 127–147 (ITAQTLGATAATLVGVSVYGV), 161–181 (VSAFFVELIATSIVVFLASAL), and 192–212 (LTGFVIGTVISLGVLITGPIS). The short motif at 217-219 (NPA) is the NPA 2 element. Residues 231–251 (FEDLWIYMTAPVIGAIIGVLT) traverse the membrane as a helical segment. The residue at position 272 (serine 272) is a Phosphoserine.

Belongs to the MIP/aquaporin (TC 1.A.8) family. NIP (TC 1.A.8.12) subfamily. In terms of tissue distribution, expressed in floral buds.

It localises to the membrane. Its function is as follows. Aquaporins facilitate the transport of water and small neutral solutes across cell membranes. In Arabidopsis thaliana (Mouse-ear cress), this protein is Probable aquaporin NIP7-1 (NIP7-1).